A 168-amino-acid polypeptide reads, in one-letter code: Crossover junction endodeoxyribonuclease RuvC (168 aa).

Residues D9, E70, and D145 contribute to the active site. 3 residues coordinate Mg(2+): D9, E70, and D145.

This sequence belongs to the RuvC family. As to quaternary structure, homodimer which binds Holliday junction (HJ) DNA. The HJ becomes 2-fold symmetrical on binding to RuvC with unstacked arms; it has a different conformation from HJ DNA in complex with RuvA. In the full resolvosome a probable DNA-RuvA(4)-RuvB(12)-RuvC(2) complex forms which resolves the HJ. Requires Mg(2+) as cofactor.

It is found in the cytoplasm. The enzyme catalyses Endonucleolytic cleavage at a junction such as a reciprocal single-stranded crossover between two homologous DNA duplexes (Holliday junction).. Functionally, the RuvA-RuvB-RuvC complex processes Holliday junction (HJ) DNA during genetic recombination and DNA repair. Endonuclease that resolves HJ intermediates. Cleaves cruciform DNA by making single-stranded nicks across the HJ at symmetrical positions within the homologous arms, yielding a 5'-phosphate and a 3'-hydroxyl group; requires a central core of homology in the junction. The consensus cleavage sequence is 5'-(A/T)TT(C/G)-3'. Cleavage occurs on the 3'-side of the TT dinucleotide at the point of strand exchange. HJ branch migration catalyzed by RuvA-RuvB allows RuvC to scan DNA until it finds its consensus sequence, where it cleaves and resolves the cruciform DNA. The protein is Crossover junction endodeoxyribonuclease RuvC of Chlamydia caviae (strain ATCC VR-813 / DSM 19441 / 03DC25 / GPIC) (Chlamydophila caviae).